A 302-amino-acid chain; its full sequence is tRNA dimethylallyltransferase 1 (302 aa).

Residue 6–13 (GPTACGKT) coordinates ATP. 8 to 13 (TACGKT) serves as a coordination point for substrate. 2 interaction with substrate tRNA regions span residues 31-34 (DSRQ) and 154-158 (QRAIR).

It belongs to the IPP transferase family. In terms of assembly, monomer. Mg(2+) serves as cofactor.

It carries out the reaction adenosine(37) in tRNA + dimethylallyl diphosphate = N(6)-dimethylallyladenosine(37) in tRNA + diphosphate. Functionally, catalyzes the transfer of a dimethylallyl group onto the adenine at position 37 in tRNAs that read codons beginning with uridine, leading to the formation of N6-(dimethylallyl)adenosine (i(6)A). The sequence is that of tRNA dimethylallyltransferase 1 from Porphyromonas gingivalis (strain ATCC 33277 / DSM 20709 / CIP 103683 / JCM 12257 / NCTC 11834 / 2561).